The following is a 590-amino-acid chain: Probable indole-3-acetic acid-amido synthetase GH3.1 (590 aa).

Belongs to the IAA-amido conjugating enzyme family.

Catalyzes the synthesis of indole-3-acetic acid (IAA)-amino acid conjugates, providing a mechanism for the plant to cope with the presence of excess auxin. This Arabidopsis thaliana (Mouse-ear cress) protein is Probable indole-3-acetic acid-amido synthetase GH3.1 (GH3.1).